We begin with the raw amino-acid sequence, 158 residues long: MADTIQSLDQLSALKPAESEAPKHTKKVDKYGRAYATGKRKDAVARVWIKPGAGKILVNAREVDVYFARPVLRMMIQQPLVAAARAGQYDVVCTVAGGGLSGQAGAVRHGLSKALTHFEPELRGVLKKGGFLTRDSRVVERKKYGKAKARRSFQFSKR.

Belongs to the universal ribosomal protein uS9 family.

This Nitrobacter winogradskyi (strain ATCC 25391 / DSM 10237 / CIP 104748 / NCIMB 11846 / Nb-255) protein is Small ribosomal subunit protein uS9.